Consider the following 151-residue polypeptide: Deoxyuridine 5'-triphosphate nucleotidohydrolase (151 aa).

Substrate-binding positions include 70–72, Asn-83, and 87–89; these read RSG and LID.

The protein belongs to the dUTPase family. Mg(2+) serves as cofactor.

It catalyses the reaction dUTP + H2O = dUMP + diphosphate + H(+). It functions in the pathway pyrimidine metabolism; dUMP biosynthesis; dUMP from dCTP (dUTP route): step 2/2. Functionally, this enzyme is involved in nucleotide metabolism: it produces dUMP, the immediate precursor of thymidine nucleotides and it decreases the intracellular concentration of dUTP so that uracil cannot be incorporated into DNA. This Methylococcus capsulatus (strain ATCC 33009 / NCIMB 11132 / Bath) protein is Deoxyuridine 5'-triphosphate nucleotidohydrolase.